A 350-amino-acid polypeptide reads, in one-letter code: UDP-glucose 4-epimerase (350 aa).

7-38 contributes to the NAD(+) binding site; that stretch reads KILVTGSAGFIGTHTVVQLLNNGFNVSIIDNF. Serine 133 contacts substrate. Tyrosine 157 serves as the catalytic Proton acceptor.

The protein belongs to the NAD(P)-dependent epimerase/dehydratase family. NAD(+) serves as cofactor.

It catalyses the reaction UDP-alpha-D-glucose = UDP-alpha-D-galactose. The protein operates within carbohydrate metabolism; galactose metabolism. The polypeptide is UDP-glucose 4-epimerase (GALE) (Pisum sativum (Garden pea)).